The sequence spans 419 residues: L-rhamnose isomerase (419 aa).

His-262, Asp-294, and Asp-296 together coordinate Mn(2+).

It belongs to the rhamnose isomerase family. As to quaternary structure, homotetramer. The cofactor is Mn(2+).

The protein localises to the cytoplasm. It catalyses the reaction L-rhamnopyranose = L-rhamnulose. It functions in the pathway carbohydrate degradation; L-rhamnose degradation; glycerone phosphate from L-rhamnose: step 1/3. In terms of biological role, catalyzes the interconversion of L-rhamnose and L-rhamnulose. This Klebsiella pneumoniae (strain 342) protein is L-rhamnose isomerase.